The sequence spans 262 residues: Small ribosomal subunit protein eS1 (262 aa).

This sequence belongs to the eukaryotic ribosomal protein eS1 family. As to quaternary structure, component of the small ribosomal subunit. Mature ribosomes consist of a small (40S) and a large (60S) subunit. The 40S subunit contains about 32 different proteins and 1 molecule of RNA (18S). The 60S subunit contains about 42 different proteins and 3 molecules of RNA (28S, 5.8S and 5S).

It localises to the cytoplasm. Component of the ribosome, a large ribonucleoprotein complex responsible for the synthesis of proteins in the cell. The small ribosomal subunit (SSU) binds messenger RNAs (mRNAs) and translates the encoded message by selecting cognate aminoacyl-transfer RNA (tRNA) molecules. The large subunit (LSU) contains the ribosomal catalytic site termed the peptidyl transferase center (PTC), which catalyzes the formation of peptide bonds, thereby polymerizing the amino acids delivered by tRNAs into a polypeptide chain. The nascent polypeptides leave the ribosome through a tunnel in the LSU and interact with protein factors that function in enzymatic processing, targeting, and the membrane insertion of nascent chains at the exit of the ribosomal tunnel. This Plasmodium falciparum (isolate 3D7) protein is Small ribosomal subunit protein eS1.